Consider the following 269-residue polypeptide: Carbohydrate metabolism regulator TYE7 (269 aa).

Residues glutamine 146–histidine 178 form a disordered region. Over residues threonine 159 to lysine 168 the composition is skewed to basic residues. Basic and acidic residues predominate over residues lysine 169–histidine 178. The 72-residue stretch at serine 173–leucine 244 folds into the bHLH domain.

In terms of assembly, efficient DNA binding requires dimerization with another bHLH protein.

Its subcellular location is the nucleus. Key transcriptional regulator of carbohydrate metabolism. Binds the promoter sequences of the glycolytic genes at the CANNTG motif and activates their expression during growth on either fermentable or non-fermentable carbon sources as well as under hypoxic growth conditions. Complete glycolytic activation by GAL4 and TYE7 is required for full virulence. Involved in biofilm formation and negatively regulates hyphal formation under hypoxia. Also controls the expression of the copper transport protein CTR1. The sequence is that of Carbohydrate metabolism regulator TYE7 (TYE7) from Candida albicans (strain SC5314 / ATCC MYA-2876) (Yeast).